A 124-amino-acid polypeptide reads, in one-letter code: Small ribosomal subunit protein uS12 (124 aa).

Residue Asp89 is modified to 3-methylthioaspartic acid.

Belongs to the universal ribosomal protein uS12 family. As to quaternary structure, part of the 30S ribosomal subunit. Contacts proteins S8 and S17. May interact with IF1 in the 30S initiation complex.

With S4 and S5 plays an important role in translational accuracy. Its function is as follows. Interacts with and stabilizes bases of the 16S rRNA that are involved in tRNA selection in the A site and with the mRNA backbone. Located at the interface of the 30S and 50S subunits, it traverses the body of the 30S subunit contacting proteins on the other side and probably holding the rRNA structure together. The combined cluster of proteins S8, S12 and S17 appears to hold together the shoulder and platform of the 30S subunit. This is Small ribosomal subunit protein uS12 from Buchnera aphidicola subsp. Acyrthosiphon pisum (strain 5A).